The primary structure comprises 166 residues: Peptidyl-prolyl cis-trans isomerase-like 1 (166 aa).

In terms of domain architecture, PPIase cyclophilin-type spans 10-164 (QPPNVYLETS…DDVKILKAYP (155 aa)). Cyclosporin A is bound by residues 54–65 (HRIIKDFMIQGG), 70–71 (TG), 99–104 (AMANAG), 109–113 (GSQFF), Thr119, and Lys125. Phosphoserine is present on Ser149.

Belongs to the cyclophilin-type PPIase family. PPIL1 subfamily. As to quaternary structure, identified in the spliceosome C complex. Interacts with SNW1/SKIP. Interacts with CDC40/PRP17; this interaction leads to CDC40 isomerization. Interacts with RBM22.

The protein resides in the nucleus. The enzyme catalyses [protein]-peptidylproline (omega=180) = [protein]-peptidylproline (omega=0). Its activity is regulated as follows. Inhibited by Cyclosporin A. Involved in pre-mRNA splicing as component of the spliceosome. PPIases accelerate the folding of proteins. It catalyzes the cis-trans isomerization of proline imidic peptide bonds in oligopeptides. Catalyzes prolyl peptide bond isomerization in CDC40/PRP17. Plays an important role in embryonic brain development; this function is independent of its isomerase activity. The polypeptide is Peptidyl-prolyl cis-trans isomerase-like 1 (Ppil1) (Mus musculus (Mouse)).